We begin with the raw amino-acid sequence, 105 residues long: uncharacterized protein (105 aa).

A helical membrane pass occupies residues 25 to 47 (AHSVTLLFGIFRSSPFLLLFLLI). Positions 54-89 (GRGSQRMKKKRGRANPSENLRERADPTNGPAENGKK) are disordered.

Its subcellular location is the membrane. This is an uncharacterized protein from Saccharomyces cerevisiae (strain ATCC 204508 / S288c) (Baker's yeast).